The chain runs to 140 residues: METVIMITYWDLISHSEMFSDSYMSQEIADGLRLEVEGKIVSRTEGNIFDSLIGGNASAEGPEGKGTESTVITGVDSVMNHHLQETSFTKEAYNKCIKDYMKSIKGKLEEQRPKRVKPFMTGAAEQIKHILANFKNYQKT.

Positions 6 to 140 constitute a TCTP domain; sequence MITYWDLISH…LANFKNYQKT (135 aa).

This sequence belongs to the TCTP family.

This is TPT1-like protein from Homo sapiens (Human).